Here is a 317-residue protein sequence, read N- to C-terminus: ADP-L-glycero-D-manno-heptose-6-epimerase (317 aa).

NADP(+) contacts are provided by residues 10-11 (FI), 31-32 (DD), Lys38, Lys53, 75-79 (QGACS), and Asn92. Tyr139 acts as the Proton acceptor in catalysis. Lys143 is a binding site for NADP(+). Substrate is bound at residue Asn166. The NADP(+) site is built by Val167 and Lys175. Lys175 serves as the catalytic Proton acceptor. Substrate-binding positions include Gly177, His184, 198-201 (FEGV), Arg211, and Tyr275.

It belongs to the NAD(P)-dependent epimerase/dehydratase family. HldD subfamily. As to quaternary structure, homopentamer. It depends on NADP(+) as a cofactor.

The catalysed reaction is ADP-D-glycero-beta-D-manno-heptose = ADP-L-glycero-beta-D-manno-heptose. It functions in the pathway nucleotide-sugar biosynthesis; ADP-L-glycero-beta-D-manno-heptose biosynthesis; ADP-L-glycero-beta-D-manno-heptose from D-glycero-beta-D-manno-heptose 7-phosphate: step 4/4. Functionally, catalyzes the interconversion between ADP-D-glycero-beta-D-manno-heptose and ADP-L-glycero-beta-D-manno-heptose via an epimerization at carbon 6 of the heptose. This is ADP-L-glycero-D-manno-heptose-6-epimerase from Shewanella piezotolerans (strain WP3 / JCM 13877).